The following is a 301-amino-acid chain: 33 kDa chaperonin (301 aa).

2 disulfides stabilise this stretch: C239–C241 and C272–C275.

Belongs to the HSP33 family. Post-translationally, under oxidizing conditions two disulfide bonds are formed involving the reactive cysteines. Under reducing conditions zinc is bound to the reactive cysteines and the protein is inactive.

It localises to the cytoplasm. Its function is as follows. Redox regulated molecular chaperone. Protects both thermally unfolding and oxidatively damaged proteins from irreversible aggregation. Plays an important role in the bacterial defense system toward oxidative stress. The sequence is that of 33 kDa chaperonin from Nostoc sp. (strain PCC 7120 / SAG 25.82 / UTEX 2576).